We begin with the raw amino-acid sequence, 388 residues long: Chorismate synthase (388 aa).

R39 and R45 together coordinate NADP(+). The segment at 95–115 (EKQKKIRRVSKPRPGHADLVG) is disordered. A compositionally biased stretch (basic residues) spans 98 to 108 (KKIRRVSKPRP). FMN is bound by residues 130 to 132 (RSS), 251 to 252 (NA), G296, 311 to 315 (KPIPT), and R337.

It belongs to the chorismate synthase family. In terms of assembly, homotetramer. The cofactor is FMNH2.

It catalyses the reaction 5-O-(1-carboxyvinyl)-3-phosphoshikimate = chorismate + phosphate. Its pathway is metabolic intermediate biosynthesis; chorismate biosynthesis; chorismate from D-erythrose 4-phosphate and phosphoenolpyruvate: step 7/7. Functionally, catalyzes the anti-1,4-elimination of the C-3 phosphate and the C-6 proR hydrogen from 5-enolpyruvylshikimate-3-phosphate (EPSP) to yield chorismate, which is the branch point compound that serves as the starting substrate for the three terminal pathways of aromatic amino acid biosynthesis. This reaction introduces a second double bond into the aromatic ring system. This is Chorismate synthase from Enterococcus faecalis (strain ATCC 700802 / V583).